The following is a 100-amino-acid chain: Urease subunit gamma (100 aa).

It belongs to the urease gamma subunit family. In terms of assembly, heterotrimer of UreA (gamma), UreB (beta) and UreC (alpha) subunits. Three heterotrimers associate to form the active enzyme.

It is found in the cytoplasm. The enzyme catalyses urea + 2 H2O + H(+) = hydrogencarbonate + 2 NH4(+). The protein operates within nitrogen metabolism; urea degradation; CO(2) and NH(3) from urea (urease route): step 1/1. The chain is Urease subunit gamma from Parasynechococcus marenigrum (strain WH8102).